The primary structure comprises 265 residues: NAD kinase (265 aa).

The active-site Proton acceptor is aspartate 45. Residues 45–46 (DG), 122–123 (NE), arginine 148, aspartate 150, 161–166 (TAYNKS), alanine 185, and glutamine 223 each bind NAD(+).

Belongs to the NAD kinase family. A divalent metal cation serves as cofactor.

The protein localises to the cytoplasm. The catalysed reaction is NAD(+) + ATP = ADP + NADP(+) + H(+). Functionally, involved in the regulation of the intracellular balance of NAD and NADP, and is a key enzyme in the biosynthesis of NADP. Catalyzes specifically the phosphorylation on 2'-hydroxyl of the adenosine moiety of NAD to yield NADP. The sequence is that of NAD kinase from Enterococcus faecalis (strain ATCC 700802 / V583).